A 442-amino-acid polypeptide reads, in one-letter code: 3-phosphoshikimate 1-carboxyvinyltransferase (442 aa).

3-phosphoshikimate is bound by residues K27, S28, and R32. K27 lines the phosphoenolpyruvate pocket. Residues G100 and R128 each coordinate phosphoenolpyruvate. 6 residues coordinate 3-phosphoshikimate: S174, S175, Q176, S204, D321, and K348. Residue Q176 participates in phosphoenolpyruvate binding. The active-site Proton acceptor is D321. Phosphoenolpyruvate contacts are provided by R352, R394, and K424.

This sequence belongs to the EPSP synthase family. As to quaternary structure, monomer.

It localises to the cytoplasm. The enzyme catalyses 3-phosphoshikimate + phosphoenolpyruvate = 5-O-(1-carboxyvinyl)-3-phosphoshikimate + phosphate. It functions in the pathway metabolic intermediate biosynthesis; chorismate biosynthesis; chorismate from D-erythrose 4-phosphate and phosphoenolpyruvate: step 6/7. Catalyzes the transfer of the enolpyruvyl moiety of phosphoenolpyruvate (PEP) to the 5-hydroxyl of shikimate-3-phosphate (S3P) to produce enolpyruvyl shikimate-3-phosphate and inorganic phosphate. The protein is 3-phosphoshikimate 1-carboxyvinyltransferase of Herminiimonas arsenicoxydans.